The chain runs to 328 residues: GTPase Obg (328 aa).

An Obg domain is found at 1–159 (MNFIDEVKIY…MWVQLSLKLL (159 aa)). An OBG-type G domain is found at 160–327 (SDVGLVGLPN…IIKLALQTIK (168 aa)). GTP contacts are provided by residues 166–173 (GLPNAGKS), 191–195 (FTTLV), 212–215 (DIPG), 279–282 (NKID), and 308–310 (STY). Mg(2+) contacts are provided by Ser173 and Thr193.

This sequence belongs to the TRAFAC class OBG-HflX-like GTPase superfamily. OBG GTPase family. As to quaternary structure, monomer. Requires Mg(2+) as cofactor.

The protein resides in the cytoplasm. In terms of biological role, an essential GTPase which binds GTP, GDP and possibly (p)ppGpp with moderate affinity, with high nucleotide exchange rates and a fairly low GTP hydrolysis rate. Plays a role in control of the cell cycle, stress response, ribosome biogenesis and in those bacteria that undergo differentiation, in morphogenesis control. The sequence is that of GTPase Obg from Rickettsia bellii (strain RML369-C).